Reading from the N-terminus, the 274-residue chain is 2,3,4,5-tetrahydropyridine-2,6-dicarboxylate N-succinyltransferase (274 aa).

Substrate-binding residues include arginine 107 and aspartate 144.

It belongs to the transferase hexapeptide repeat family. In terms of assembly, homotrimer.

Its subcellular location is the cytoplasm. The enzyme catalyses (S)-2,3,4,5-tetrahydrodipicolinate + succinyl-CoA + H2O = (S)-2-succinylamino-6-oxoheptanedioate + CoA. Its pathway is amino-acid biosynthesis; L-lysine biosynthesis via DAP pathway; LL-2,6-diaminopimelate from (S)-tetrahydrodipicolinate (succinylase route): step 1/3. The sequence is that of 2,3,4,5-tetrahydropyridine-2,6-dicarboxylate N-succinyltransferase from Cereibacter sphaeroides (strain ATCC 17025 / ATH 2.4.3) (Rhodobacter sphaeroides).